A 70-amino-acid polypeptide reads, in one-letter code: Large ribosomal subunit protein bL31 (70 aa).

Positions 16, 18, 38, and 41 each coordinate Zn(2+).

Belongs to the bacterial ribosomal protein bL31 family. Type A subfamily. In terms of assembly, part of the 50S ribosomal subunit. It depends on Zn(2+) as a cofactor.

Binds the 23S rRNA. This chain is Large ribosomal subunit protein bL31, found in Mycolicibacterium gilvum (strain PYR-GCK) (Mycobacterium gilvum (strain PYR-GCK)).